A 992-amino-acid polypeptide reads, in one-letter code: MEQQIHQAVEIAMSGTADPNLKNQAFAFINQIKSTEDGYKSCVDILVKSGAQPVNEGLKFFIFQVVDENIEKLSSEQLYSLNDQLFKTLSSYISNDVSDPIYLRNKFSQLFAKIFCYVYLNIYPNFFKSLFELISSNKQIALDYYTRIVIAIHYEIGDKFIARSRELQDRNNLLKDAIRLNDMNALVSSWGKILQVPSNSSEVLNNQLKIVGQYINWMEIGLFISNDYMRSIFQYLNKEHQRNETCMTLIEIISKKMKPSNKLELVGILDITNIINSIDLSENDDLEFVENIAKLINQVGQELLIVLENEPTLFSSINAQLAKLWPLIFSSLGHEYDDVSQHVFPFIQQYLLLCKKSPELGSLDLLSTLLNKIIIKMKFDDDANGVDDDDETEQFSEIRSKLKNFQDTIAVLKPDLYVEAITIVINESLFGGDKNWRKIELGLFELNNFSESLRNNLINLPKSEITNSKPFQIFQEFLVKLINSDLIINVNHPKIQIGFFDIVVKHYNFLNAQSSQQSLILRILEIFTSPLGLFNENEKVRLRSWYSFFRFVKLTKPSLNNTAFVENVVIKLQPLLVIKAELPTTDEDDDVVENGNFSSQLYLYESIGLLISLLSTDLMNHKIKFIDLVFQPLFNDLENCVSSSEQVKLNQPLISMQAHHCLMALGTFARGYDHDFQNKYSEEIRGKINNAAQVVLITLENFPKNELIRDAARFSFARFIPILKNQINIHLAKFVTLVLAANNLKISELTDFLSFLGQIVHNYKDDDNIYQLLNNLLTPLIKKIFELSSNSGEDALIPDIIRDKYQLKKAYMTFLSAIFLNHSASLFVTETNKQEFAEVVTSLLEYAYDLSETSVSKLAITQLINVVNFFGNGGKIHDPEDKYANNLPPVEGIDAFLMSRVTQLSFELPFQKQEFDLKDAQYRLIGQEISLLLKSYQQRGGDEFLSYLSNYLTNMGLSQSLMNDFGSNLVKLDARNFKKYFITFVTQLKGNK.

This sequence belongs to the exportin family.

The protein resides in the nucleus. Its subcellular location is the cytoplasm. TRNA nucleus export receptor which facilitates tRNA translocation across the nuclear pore complex. Involved in pre-tRNA splicing, probably by affecting the interaction of pre-tRNA with splicing endonuclease. In Scheffersomyces stipitis (strain ATCC 58785 / CBS 6054 / NBRC 10063 / NRRL Y-11545) (Yeast), this protein is Exportin-T (LOS1).